The sequence spans 122 residues: Large ribosomal subunit protein uL14 (122 aa).

Belongs to the universal ribosomal protein uL14 family. As to quaternary structure, part of the 50S ribosomal subunit. Forms a cluster with proteins L3 and L19. In the 70S ribosome, L14 and L19 interact and together make contacts with the 16S rRNA in bridges B5 and B8.

In terms of biological role, binds to 23S rRNA. Forms part of two intersubunit bridges in the 70S ribosome. In Xanthomonas axonopodis pv. citri (strain 306), this protein is Large ribosomal subunit protein uL14.